A 590-amino-acid chain; its full sequence is ATP-dependent lipid A-core flippase (590 aa).

A run of 6 helical transmembrane segments spans residues 31–51, 74–94, 132–152, 159–179, 259–279, and 286–306; these read IFIA…VIPK, AILT…GYLL, AVIF…ITLV, VALL…VSVI, VTAF…MIQA, and IGGF…LKHL. The ABC transmembrane type-1 domain occupies 33–315; that stretch reads IAAILAMAVV…LTDINQPLTR (283 aa). The region spanning 347-585 is the ABC transporter domain; the sequence is LVFERVGFRY…NGLYAGLHRI (239 aa). 381–388 serves as a coordination point for ATP; that stretch reads GPSGSGKT.

Belongs to the ABC transporter superfamily. Lipid exporter (TC 3.A.1.106) family. As to quaternary structure, homodimer.

It is found in the cell inner membrane. It catalyses the reaction ATP + H2O + lipid A-core oligosaccharideSide 1 = ADP + phosphate + lipid A-core oligosaccharideSide 2.. Functionally, involved in lipopolysaccharide (LPS) biosynthesis. Translocates lipid A-core from the inner to the outer leaflet of the inner membrane. Transmembrane domains (TMD) form a pore in the inner membrane and the ATP-binding domain (NBD) is responsible for energy generation. The polypeptide is ATP-dependent lipid A-core flippase (Cupriavidus pinatubonensis (strain JMP 134 / LMG 1197) (Cupriavidus necator (strain JMP 134))).